A 546-amino-acid polypeptide reads, in one-letter code: Nuclear pore complex protein Nup58 (546 aa).

17 consecutive repeat copies span residues 22-23, 36-37, 45-46, 64-65, 73-74, 82-83, 92-93, 101-102, 110-111, 119-120, 128-129, 137-138, 146-147, 155-156, 166-167, 197-198, and 199-200. Positions 22-200 are 17 X 2 AA repeats of F-G; sequence FGARPATTTA…TTAPPAFGFG (179 aa).

This sequence belongs to the NUP58 family. In terms of assembly, component of the nuclear pore complex. Interacts with Nup54. Interacts (via C-terminus) with fs(1)Yb; this interaction occurs in a RNA-independent manner. Interacts with sbr/nxf1. Interacts with Nxt1. In terms of processing, O-glycosylated; contains O-GlcNAc. O-GlcNAcylation increases with increasing ambient temperature.

It is found in the nucleus. Its subcellular location is the nuclear pore complex. Its function is as follows. Component of the nuclear pore complex, a complex required for the trafficking across the nuclear membrane. Together with Nup54, required for transposable element silencing regulation in ovarian follicle cells. By interacting with the nuclear (Nxf1/Nxt1) and cytosolic (fs(1)Yb) components of the flamenco (flam) transcripts processing pathway, enables export and subsequent piRNA production. This is Nuclear pore complex protein Nup58 from Drosophila melanogaster (Fruit fly).